We begin with the raw amino-acid sequence, 710 residues long: Choline transporter-like protein 4 (710 aa).

Topologically, residues 1 to 34 are cytoplasmic; that stretch reads MGGKQRDEDDEAYGKPVKYDPSFRGPIKNRSCTD. Residues 35–55 form a helical membrane-spanning segment; that stretch reads VICCVLFLLFILGYIVVGIVA. The Extracellular portion of the chain corresponds to 56–229; the sequence is WLYGDPRQVL…KIFEDFAQSW (174 aa). Asn-69, Asn-155, and Asn-197 each carry an N-linked (GlcNAc...) asparagine glycan. A helical transmembrane segment spans residues 230–250; the sequence is YWILVALGVALVLSLLFILLL. At 251–252 the chain is on the cytoplasmic side; it reads RL. The helical transmembrane segment at 253 to 273 threads the bilayer; the sequence is VAGPLVLVLILGVLGVLAYGI. Over 274 to 309 the chain is Extracellular; it reads YYCWEEYRVLRDKGASISQLGFTTNLSAYQSVQETW. Asn-298 carries N-linked (GlcNAc...) asparagine glycosylation. Residues 310-330 traverse the membrane as a helical segment; sequence LAALIVLAVLEAILLLMLIFL. The Cytoplasmic segment spans residues 331–358; the sequence is RQRIRIAIALLKEASKAVGQMMSTMFYP. A helical transmembrane segment spans residues 359–379; it reads LVTFVLLLICIAYWAMTALYL. Over 380 to 455 the chain is Extracellular; it reads ATSGQPQYVL…GVLGLFWTLN (76 aa). Residues Asn-393, Asn-405, and Asn-416 are each glycosylated (N-linked (GlcNAc...) asparagine). Residues 456-476 form a helical membrane-spanning segment; sequence WVLALGQCVLAGAFASFYWAF. Over 477–501 the chain is Cytoplasmic; the sequence is HKPQDIPTFPLISAFIRTLRYHTGS. A helical transmembrane segment spans residues 502–522; the sequence is LAFGALILTLVQIARVILEYI. At 523 to 560 the chain is on the extracellular side; it reads DHKLRGVQNPVARCIMCCFKCCLWCLEKFIKFLNRNAY. Residues 561-581 traverse the membrane as a helical segment; the sequence is IMIAIYGKNFCVSAKNAFMLL. The Cytoplasmic portion of the chain corresponds to 582–597; that stretch reads MRNIVRVVVLDKVTDL. Residues 598-618 traverse the membrane as a helical segment; the sequence is LLFFGKLLVVGGVGVLSFFFF. The Extracellular portion of the chain corresponds to 619–638; the sequence is SGRIPGLGKDFKSPHLNYYW. The chain crosses the membrane as a helical span at residues 639 to 659; that stretch reads LPIMTSILGAYVIASGFFSVF. The Cytoplasmic segment spans residues 660 to 710; that stretch reads GMCVDTLFLCFLEDLERNNGSLDRPYYMSKSLLKILGKKNEAPPDNKKRKK.

This sequence belongs to the CTL (choline transporter-like) family. N-glycosylated; N-glycosylation of Asn-69, Asn-155 and Asn-393 is required for a proper thiamine pyrophosphate uptake. Highly expressed in colon, also detected in prostate, trachea and lung. Isoform 3 is also expressed in colon but a lower levels. In terms of tissue distribution, expressed in colon at low levels.

Its subcellular location is the membrane. The protein resides in the apical cell membrane. It catalyses the reaction choline(out) + n H(+)(in) = choline(in) + n H(+)(out). The catalysed reaction is thiamine diphosphate(out) = thiamine diphosphate(in). Choline transporter that plays a role in the choline-acetylcholine system and is required to the efferent innervation of hair cells in the olivocochlear bundle for the maintenance of physiological function of outer hair cells and the protection of hair cells from acoustic injury. Also described as a thiamine pyrophosphate transporter in colon, may mediate the absorption of microbiota-generated thiamine pyrophosphate and contribute to host thiamine (vitamin B1) homeostasis. Its function is as follows. Also has thiamine pyrophosphate transporter activity. The sequence is that of Choline transporter-like protein 4 from Homo sapiens (Human).